Here is a 198-residue protein sequence, read N- to C-terminus: Recombination protein RecR (198 aa).

The segment at 57-72 adopts a C4-type zinc-finger fold; sequence CSVCGHITEEDPCYIC. A Toprim domain is found at 80 to 175; it reads SVICVVEDDK…KVTRLAQGLS (96 aa).

It belongs to the RecR family.

In terms of biological role, may play a role in DNA repair. It seems to be involved in an RecBC-independent recombinational process of DNA repair. It may act with RecF and RecO. This chain is Recombination protein RecR, found in Staphylococcus carnosus (strain TM300).